The following is a 213-amino-acid chain: Cytokinin riboside 5'-monophosphate phosphoribohydrolase LOG2 (213 aa).

Residues E79, 97-98, 114-120, and T126 contribute to the substrate site; these read RK and GYGTFEE.

It belongs to the LOG family. Expressed in roots and shoots. Detected in root hairs.

It localises to the cytoplasm. The protein resides in the nucleus. The enzyme catalyses N(6)-(dimethylallyl)adenosine 5'-phosphate + H2O = N(6)-dimethylallyladenine + D-ribose 5-phosphate. It carries out the reaction 9-ribosyl-trans-zeatin 5'-phosphate + H2O = trans-zeatin + D-ribose 5-phosphate. Its function is as follows. Cytokinin-activating enzyme working in the direct activation pathway. Phosphoribohydrolase that converts inactive cytokinin nucleotides to the biologically active free-base forms. The sequence is that of Cytokinin riboside 5'-monophosphate phosphoribohydrolase LOG2 (LOG2) from Arabidopsis thaliana (Mouse-ear cress).